The following is a 430-amino-acid chain: UDP-N-acetylglucosamine 1-carboxyvinyltransferase (430 aa).

Residue 22–23 coordinates phosphoenolpyruvate; that stretch reads KN. Residue arginine 102 coordinates UDP-N-acetyl-alpha-D-glucosamine. Catalysis depends on cysteine 126, which acts as the Proton donor. 2-(S-cysteinyl)pyruvic acid O-phosphothioketal is present on cysteine 126. Residues 131–135, 172–175, aspartate 317, and isoleucine 339 contribute to the UDP-N-acetyl-alpha-D-glucosamine site; these read RPVDL and KVSV.

It belongs to the EPSP synthase family. MurA subfamily.

Its subcellular location is the cytoplasm. It carries out the reaction phosphoenolpyruvate + UDP-N-acetyl-alpha-D-glucosamine = UDP-N-acetyl-3-O-(1-carboxyvinyl)-alpha-D-glucosamine + phosphate. It functions in the pathway cell wall biogenesis; peptidoglycan biosynthesis. Its function is as follows. Cell wall formation. Adds enolpyruvyl to UDP-N-acetylglucosamine. The polypeptide is UDP-N-acetylglucosamine 1-carboxyvinyltransferase (Rhizobium meliloti (strain 1021) (Ensifer meliloti)).